A 484-amino-acid chain; its full sequence is MNWEIVIGLETHTQLSTDSKIFSGSSTRFGAAPNTQANAVDLALPGSLPVMNRGAAERAILFGLAVGGKVAPRSVFARKNYFYPDLPKGYQISQYELPVVEGGTLSFFVGEEEKTVNLTRAHLEEDAGKSLHDEFSLASGAPASGIDLNRAGTPLLEIVTEPEMRSAAEAVAYARALHSLVVWLGICDGNMQEGSFRCDANVSVRPVGQKEFGTRTEIKNVNSFRFLERAILFEARRQIELIEDGGTVVQETRLYDADRDETRSMRSKEDAHDYRYFPDPDLPPLVIGQDWVDAVRAGMPELPTAQRARFEADYGLPAYDAAQLTVSRAMADYFEAVARALPAGQAKLAANWIMGEVAATLNREEKDIDAAPVSAAALATLINRIIDGTISNKIARDVFAAMWAGENGGDADAIIAARGLKQISDSGAIGAMIDEVLAANPAIVEEYRAGKQKAFNSLVGQIMKAAKGKANPQQVNELLKEKLG.

The protein belongs to the GatB/GatE family. GatB subfamily. In terms of assembly, heterotrimer of A, B and C subunits.

It carries out the reaction L-glutamyl-tRNA(Gln) + L-glutamine + ATP + H2O = L-glutaminyl-tRNA(Gln) + L-glutamate + ADP + phosphate + H(+). The catalysed reaction is L-aspartyl-tRNA(Asn) + L-glutamine + ATP + H2O = L-asparaginyl-tRNA(Asn) + L-glutamate + ADP + phosphate + 2 H(+). Allows the formation of correctly charged Asn-tRNA(Asn) or Gln-tRNA(Gln) through the transamidation of misacylated Asp-tRNA(Asn) or Glu-tRNA(Gln) in organisms which lack either or both of asparaginyl-tRNA or glutaminyl-tRNA synthetases. The reaction takes place in the presence of glutamine and ATP through an activated phospho-Asp-tRNA(Asn) or phospho-Glu-tRNA(Gln). The polypeptide is Aspartyl/glutamyl-tRNA(Asn/Gln) amidotransferase subunit B (Bordetella parapertussis (strain 12822 / ATCC BAA-587 / NCTC 13253)).